The sequence spans 157 residues: Small ribosomal subunit protein uS7 (157 aa).

The protein belongs to the universal ribosomal protein uS7 family. As to quaternary structure, part of the 30S ribosomal subunit. Contacts proteins S9 and S11.

Functionally, one of the primary rRNA binding proteins, it binds directly to 16S rRNA where it nucleates assembly of the head domain of the 30S subunit. Is located at the subunit interface close to the decoding center, probably blocks exit of the E-site tRNA. This Eikenella corrodens protein is Small ribosomal subunit protein uS7.